The chain runs to 927 residues: Sodium/calcium exchanger 3 (927 aa).

Residues 1–30 form the signal peptide; that stretch reads MAWLRLQPLTSAFLHFGLVTFVLFLNGLRA. The Extracellular portion of the chain corresponds to 31–73; the sequence is EAGDLRDVPSAGQNNESCSGSSDCKEGVILPIWYPENPSLGDK. N-linked (GlcNAc...) asparagine glycosylation is present at Asn45. The helical transmembrane segment at 74-94 threads the bilayer; the sequence is IARVIVYFVALIYMFLGVSII. Residues 95 to 147 lie on the Cytoplasmic side of the membrane; sequence ADRFMASIEVITSQEREVTIKKPNGETSTTTIRVWNETVSNLTLMALGSSAPE. An Alpha-1 repeat occupies 140–180; it reads ALGSSAPEILLSLIEVCGHGFIAGDLGPSTIVGSAAFNMFI. A helical transmembrane segment spans residues 148–168; that stretch reads ILLSLIEVCGHGFIAGDLGPS. Position 169 (Thr169) is a topological domain, extracellular. Residues 170–190 form a helical membrane-spanning segment; it reads IVGSAAFNMFIIIGICVYVIP. At 191-202 the chain is on the cytoplasmic side; it reads DGETRKIKHLRV. A helical membrane pass occupies residues 203 to 223; sequence FFVTAAWSVFAYIWLYMILAV. At 224–230 the chain is on the extracellular side; sequence FSPGVVQ. Residues 231–251 form a helical membrane-spanning segment; the sequence is VWEGLLTLFFFPVCVLLAWVA. At 252–726 the chain is on the cytoplasmic side; it reads DKRLLFYKYM…DESGEERLPS (475 aa). Residues 253 to 272 are putative calmodulin-binding region; it reads KRLLFYKYMHKRYRTDKHRG. 2 Calx-beta domains span residues 386–485 and 519–619; these read VHTD…VRLS and ATVT…IALG. 15 residues coordinate Ca(2+): Glu409, Asp445, Asp470, Asp471, Ile473, Glu475, Glu478, Asp525, Asp526, Asp527, Glu543, Asp579, Glu606, Glu607, and Glu672. A helical membrane pass occupies residues 727–747; sequence CFDYVMHFLTVFWKVLFACVP. The Extracellular portion of the chain corresponds to 748-754; that stretch reads PTEYCHG. The chain crosses the membrane as a helical span at residues 755 to 775; sequence WACFVVSILIIGMLTAIIGDL. Residues 776 to 778 lie on the Cytoplasmic side of the membrane; it reads ASH. Residues 779-799 traverse the membrane as a helical segment; sequence FGCTIGLKDSVTAVVFVAFGT. The stretch at 796 to 832 is one Alpha-2 repeat; the sequence is AFGTSVPDTFASKAAALQDVYADASIGNVTGSNAVNV. Over 800–828 the chain is Extracellular; that stretch reads SVPDTFASKAAALQDVYADASIGNVTGSN. The N-linked (GlcNAc...) asparagine glycan is linked to Asn823. The chain crosses the membrane as a helical span at residues 829–849; it reads AVNVFLGIGLAWSVAAIYWAM. The Cytoplasmic portion of the chain corresponds to 850 to 860; it reads QGQEFHVSAGT. A helical membrane pass occupies residues 861–881; the sequence is LAFSVTLFTIFAFVCLSVLLY. Residues 882–903 are Extracellular-facing; it reads RRRPHLGGELGGPRGCKLATTW. The helical transmembrane segment at 904–924 threads the bilayer; it reads LFVSLWLLYVLFATLEAYCYI. Residues 925-927 lie on the Cytoplasmic side of the membrane; the sequence is KGF.

It belongs to the Ca(2+):cation antiporter (CaCA) (TC 2.A.19) family. SLC8 subfamily. Interacts with AKAP1. As to expression, detected in neurons in brain cortex and hippocampus. Detected in pyramidal cell bodies and processes, in granule cells and interneurons in the CA1 and CA3 region of the hippocampus. Detected on astrocyte processes in brain cortex. Detected on endothelial cells in hippocampus capillaries (at protein level). Restricted to brain and skeletal muscle.

It localises to the cell membrane. Its subcellular location is the perikaryon. It is found in the cell projection. The protein resides in the dendrite. The protein localises to the dendritic spine. It localises to the sarcolemma. Its subcellular location is the cytoplasm. It is found in the sarcoplasm. The protein resides in the cell junction. The protein localises to the mitochondrion outer membrane. It localises to the endoplasmic reticulum membrane. Its subcellular location is the perinuclear region. It carries out the reaction Ca(2+)(in) + 3 Na(+)(out) = Ca(2+)(out) + 3 Na(+)(in). Calcium transport is down-regulated by Na(+) and stimulated by Ca(2+). Its function is as follows. Mediates the electrogenic exchange of Ca(2+) against Na(+) ions across the cell membrane, and thereby contributes to the regulation of cytoplasmic Ca(2+) levels and Ca(2+)-dependent cellular processes. Contributes to cellular Ca(2+) homeostasis in excitable cells, both in muscle and in brain. In a first phase, voltage-gated channels mediate the rapid increase of cytoplasmic Ca(2+) levels due to release of Ca(2+) stores from the endoplasmic reticulum. SLC8A3 mediates the export of Ca(2+) from the cell during the next phase, so that cytoplasmic Ca(2+) levels rapidly return to baseline. Contributes to Ca(2+) transport during excitation-contraction coupling in muscle. In neurons, contributes to the rapid decrease of cytoplasmic Ca(2+) levels back to baseline after neuronal activation, and thereby contributes to modulate synaptic plasticity, learning and memory. Required for normal oligodendrocyte differentiation and for normal myelination. Mediates Ca(2+) efflux from mitochondria and contributes to mitochondrial Ca(2+) ion homeostasis. The protein is Sodium/calcium exchanger 3 (Slc8a3) of Rattus norvegicus (Rat).